We begin with the raw amino-acid sequence, 161 residues long: Small ribosomal subunit protein uS9 (161 aa).

The protein belongs to the universal ribosomal protein uS9 family.

The polypeptide is Small ribosomal subunit protein uS9 (Rickettsia felis (strain ATCC VR-1525 / URRWXCal2) (Rickettsia azadi)).